Consider the following 217-residue polypeptide: GTP cyclohydrolase 1 (217 aa).

The Zn(2+) site is built by cysteine 109, histidine 112, and cysteine 180.

The protein belongs to the GTP cyclohydrolase I family. As to quaternary structure, homomer.

The enzyme catalyses GTP + H2O = 7,8-dihydroneopterin 3'-triphosphate + formate + H(+). The protein operates within cofactor biosynthesis; 7,8-dihydroneopterin triphosphate biosynthesis; 7,8-dihydroneopterin triphosphate from GTP: step 1/1. The protein is GTP cyclohydrolase 1 of Aliivibrio salmonicida (strain LFI1238) (Vibrio salmonicida (strain LFI1238)).